An 853-amino-acid polypeptide reads, in one-letter code: Envelope glycoprotein gp160 (853 aa).

Positions 1 to 31 (MRVKEIRKNWQHLRGGILLLGMLMICSAAKE) are cleaved as a signal peptide. At 32-681 (KTWVTIYYGV…ITNWLWYIRL (650 aa)) the chain is on the extracellular side. Residues cysteine 53 and cysteine 73 are joined by a disulfide bond. 19 N-linked (GlcNAc...) asparagine; by host glycosylation sites follow: asparagine 87, asparagine 129, asparagine 134, asparagine 138, asparagine 157, asparagine 189, asparagine 199, asparagine 232, asparagine 236, asparagine 243, asparagine 264, asparagine 278, asparagine 291, asparagine 297, asparagine 303, asparagine 333, asparagine 340, asparagine 356, and asparagine 362. 5 disulfides stabilise this stretch: cysteine 118-cysteine 207, cysteine 125-cysteine 198, cysteine 130-cysteine 158, cysteine 220-cysteine 249, and cysteine 230-cysteine 241. The tract at residues 130–157 (CTNLNITKNTTNPTSSSWGMMEKGEIKN) is V1. Residues 158–198 (CSFYITTSIRNKVKKEYALFNRLDVVPIENTNNTKYRLISC) form a V2 region. The segment at 298–331 (CTRPNNNTRRRLSIGPGRAFYARRNIIGDIRQAH) is V3. Cysteine 298 and cysteine 332 are joined by a disulfide. The CD4-binding loop stretch occupies residues 364–374 (SSGGDPEIVMH). 2 disulfides stabilise this stretch: cysteine 378/cysteine 441 and cysteine 385/cysteine 414. The tract at residues 385 to 414 (CNTAQLFNSTWNVTGGTNGTEGNDIITLQC) is V4. 5 N-linked (GlcNAc...) asparagine; by host glycosylation sites follow: asparagine 392, asparagine 396, asparagine 402, asparagine 444, and asparagine 456. Positions 459-468 (ETETEIFRPG) are V5. Residues 509-529 (AVGIGAVFLGFLGAAGSTMGA) are fusion peptide. The immunosuppression stretch occupies residues 571-589 (KQLQARVLALERYLRDQQL). Residues cysteine 595 and cysteine 601 are joined by a disulfide bond. N-linked (GlcNAc...) asparagine; by host glycans are attached at residues asparagine 608, asparagine 613, asparagine 622, and asparagine 634. The stretch at 630-664 (REIDNYTDYIYDLLEKSQTQQEKNEKELLELDKWA) forms a coiled coil. The interval 659 to 680 (ELDKWASLWNWFDITNWLWYIR) is MPER; binding to GalCer. Residues 682–702 (FIMIVGGLIGLRIVFAVLSIV) form a helical membrane-spanning segment. The Cytoplasmic portion of the chain corresponds to 703 to 853 (NRVRQGYSPL…IRQGLERALL (151 aa)). The short motif at 709–712 (YSPL) is the YXXL motif; contains endocytosis signal element. A disordered region spans residues 718-740 (LPASRGPDRPEGTEEEGGERDRD). S-palmitoyl cysteine; by host attachment occurs at residues cysteine 761 and cysteine 834. The Di-leucine internalization motif signature appears at 852–853 (LL).

It belongs to the HIV-1 env protein family. In terms of assembly, the mature envelope protein (Env) consists of a homotrimer of non-covalently associated gp120-gp41 heterodimers. The resulting complex protrudes from the virus surface as a spike. There seems to be as few as 10 spikes on the average virion. Interacts with host CD4, CCR5 and CXCR4. Gp120 also interacts with the C-type lectins CD209/DC-SIGN and CLEC4M/DC-SIGNR (collectively referred to as DC-SIGN(R)). Gp120 and gp41 interact with GalCer. Gp120 interacts with host ITGA4/ITGB7 complex; on CD4+ T-cells, this interaction results in rapid activation of integrin ITGAL/LFA-1, which facilitates efficient cell-to-cell spreading of HIV-1. Gp120 interacts with cell-associated heparan sulfate; this interaction increases virus infectivity on permissive cells and may be involved in infection of CD4- cells. As to quaternary structure, the mature envelope protein (Env) consists of a homotrimer of non-covalently associated gp120-gp41 heterodimers. The resulting complex protrudes from the virus surface as a spike. There seems to be as few as 10 spikes on the average virion. Post-translationally, highly glycosylated by host. The high number of glycan on the protein is reffered to as 'glycan shield' because it contributes to hide protein sequence from adaptive immune system. Palmitoylation of the transmembrane protein and of Env polyprotein (prior to its proteolytic cleavage) is essential for their association with host cell membrane lipid rafts. Palmitoylation is therefore required for envelope trafficking to classical lipid rafts, but not for viral replication. In terms of processing, specific enzymatic cleavages in vivo yield mature proteins. Envelope glycoproteins are synthesized as an inactive precursor that is heavily N-glycosylated and processed likely by host cell furin in the Golgi to yield the mature SU and TM proteins. The cleavage site between SU and TM requires the minimal sequence [KR]-X-[KR]-R. About 2 of the 9 disulfide bonds of gp41 are reduced by P4HB/PDI, following binding to CD4 receptor.

The protein localises to the virion membrane. The protein resides in the host cell membrane. Its subcellular location is the host endosome membrane. Oligomerizes in the host endoplasmic reticulum into predominantly trimers. In a second time, gp160 transits in the host Golgi, where glycosylation is completed. The precursor is then proteolytically cleaved in the trans-Golgi and thereby activated by cellular furin or furin-like proteases to produce gp120 and gp41. Functionally, attaches the virus to the host lymphoid cell by binding to the primary receptor CD4. This interaction induces a structural rearrangement creating a high affinity binding site for a chemokine coreceptor like CXCR4 and/or CCR5. Acts as a ligand for CD209/DC-SIGN and CLEC4M/DC-SIGNR, which are respectively found on dendritic cells (DCs), and on endothelial cells of liver sinusoids and lymph node sinuses. These interactions allow capture of viral particles at mucosal surfaces by these cells and subsequent transmission to permissive cells. HIV subverts the migration properties of dendritic cells to gain access to CD4+ T-cells in lymph nodes. Virus transmission to permissive T-cells occurs either in trans (without DCs infection, through viral capture and transmission), or in cis (following DCs productive infection, through the usual CD4-gp120 interaction), thereby inducing a robust infection. In trans infection, bound virions remain infectious over days and it is proposed that they are not degraded, but protected in non-lysosomal acidic organelles within the DCs close to the cell membrane thus contributing to the viral infectious potential during DCs' migration from the periphery to the lymphoid tissues. On arrival at lymphoid tissues, intact virions recycle back to DCs' cell surface allowing virus transmission to CD4+ T-cells. Its function is as follows. Acts as a class I viral fusion protein. Under the current model, the protein has at least 3 conformational states: pre-fusion native state, pre-hairpin intermediate state, and post-fusion hairpin state. During fusion of viral and target intracellular membranes, the coiled coil regions (heptad repeats) assume a trimer-of-hairpins structure, positioning the fusion peptide in close proximity to the C-terminal region of the ectodomain. The formation of this structure appears to drive apposition and subsequent fusion of viral and target cell membranes. Complete fusion occurs in host cell endosomes and is dynamin-dependent, however some lipid transfer might occur at the plasma membrane. The virus undergoes clathrin-dependent internalization long before endosomal fusion, thus minimizing the surface exposure of conserved viral epitopes during fusion and reducing the efficacy of inhibitors targeting these epitopes. Membranes fusion leads to delivery of the nucleocapsid into the cytoplasm. The protein is Envelope glycoprotein gp160 of Human immunodeficiency virus type 1 group M subtype B (strain 89.6) (HIV-1).